A 185-amino-acid polypeptide reads, in one-letter code: Stathmin-4 (185 aa).

The SLD domain maps to Ser-48–Arg-185. A coiled-coil region spans residues Ser-90–Arg-185. Positions Glu-165–Arg-185 are disordered. Over residues Arg-166–Arg-185 the composition is skewed to basic and acidic residues.

Belongs to the stathmin family. In terms of tissue distribution, nervous tissue.

This chain is Stathmin-4 (stmn4), found in Xenopus laevis (African clawed frog).